The chain runs to 511 residues: 2-isopropylmalate synthase (511 aa).

One can recognise a Pyruvate carboxyltransferase domain in the interval 6–269 (IIIFDTTLRD…YTDIKCENIF (264 aa)). Mn(2+)-binding residues include Asp15, His203, His205, and Asn239. A regulatory domain region spans residues 394 to 511 (VIEKLSVISG…SLKVEERKMA (118 aa)).

It belongs to the alpha-IPM synthase/homocitrate synthase family. LeuA type 1 subfamily. Homodimer. It depends on Mn(2+) as a cofactor.

It is found in the cytoplasm. The catalysed reaction is 3-methyl-2-oxobutanoate + acetyl-CoA + H2O = (2S)-2-isopropylmalate + CoA + H(+). It functions in the pathway amino-acid biosynthesis; L-leucine biosynthesis; L-leucine from 3-methyl-2-oxobutanoate: step 1/4. Functionally, catalyzes the condensation of the acetyl group of acetyl-CoA with 3-methyl-2-oxobutanoate (2-ketoisovalerate) to form 3-carboxy-3-hydroxy-4-methylpentanoate (2-isopropylmalate). The chain is 2-isopropylmalate synthase from Campylobacter jejuni subsp. jejuni serotype O:23/36 (strain 81-176).